The chain runs to 257 residues: Diphthine synthase (257 aa).

Residues I11, D89, I92, 117–118 (SV), L169, L210, and H235 contribute to the S-adenosyl-L-methionine site.

This sequence belongs to the diphthine synthase family. In terms of assembly, homodimer.

The catalysed reaction is 2-[(3S)-amino-3-carboxypropyl]-L-histidyl-[translation elongation factor 2] + 3 S-adenosyl-L-methionine = diphthine-[translation elongation factor 2] + 3 S-adenosyl-L-homocysteine + 3 H(+). Its pathway is protein modification; peptidyl-diphthamide biosynthesis. S-adenosyl-L-methionine-dependent methyltransferase that catalyzes the trimethylation of the amino group of the modified target histidine residue in translation elongation factor 2 (EF-2), to form an intermediate called diphthine. The three successive methylation reactions represent the second step of diphthamide biosynthesis. The polypeptide is Diphthine synthase (Saccharolobus solfataricus (strain ATCC 35092 / DSM 1617 / JCM 11322 / P2) (Sulfolobus solfataricus)).